The following is a 637-amino-acid chain: Zinc-transporting ATPase (637 aa).

The next 4 helical transmembrane spans lie at 43–63 (GWLL…AFVI), 89–109 (IFAA…ILIF), 258–278 (GVLI…GWSW), and 286–306 (MVFM…PAAL). The 4-aspartylphosphate intermediate role is filled by D337. Residues D535 and D539 each coordinate Mg(2+). Residues 599-619 (VICLLICANFLQAMELPFGVI) form a helical membrane-spanning segment.

This sequence belongs to the cation transport ATPase (P-type) (TC 3.A.3) family. Type IB subfamily.

Its subcellular location is the cell membrane. The catalysed reaction is Zn(2+)(out) + ATP(in) + H2O(in) = Zn(2+)(in) + ADP(in) + phosphate(in) + H(+)(in). Its function is as follows. Couples the hydrolysis of ATP with the transport of zinc into the cell. Plays an important role in protecting cells against oxidative stress. ZosA-mediated zinc transport is required for post-transcriptional control of comK and competence development. This Bacillus subtilis (strain 168) protein is Zinc-transporting ATPase (zosA).